Reading from the N-terminus, the 763-residue chain is Phosphoglycerol transferase I (763 aa).

The next 4 membrane-spanning stretches (helical) occupy residues 1 to 21, 26 to 46, 77 to 97, and 108 to 128; these read MSELLSVALFLASVLIYAWKA, WWFAATLTVLGLFVILNITLY, ILPGIGIALALVAVFGALGWV, and VGYSLLALLLALGSVDASPAF.

The protein belongs to the OpgB family.

The protein resides in the cell inner membrane. It catalyses the reaction a phosphatidylglycerol + a membrane-derived-oligosaccharide D-glucose = a 1,2-diacyl-sn-glycerol + a membrane-derived-oligosaccharide 6-(glycerophospho)-D-glucose.. The protein operates within glycan metabolism; osmoregulated periplasmic glucan (OPG) biosynthesis. Functionally, transfers a phosphoglycerol residue from phosphatidylglycerol to the membrane-bound nascent glucan backbones. This Salmonella heidelberg (strain SL476) protein is Phosphoglycerol transferase I.